The primary structure comprises 40 residues: Meleagrin (40 aa).

Gln1 is modified (pyrrolidone carboxylic acid). 3 disulfides stabilise this stretch: Cys6–Cys33, Cys12–Cys28, and Cys16–Cys32.

This sequence belongs to the transferrin family.

This Meleagris gallopavo (Wild turkey) protein is Meleagrin.